A 716-amino-acid chain; its full sequence is Polyribonucleotide nucleotidyltransferase (716 aa).

Residues Asp-495 and Asp-501 each contribute to the Mg(2+) site. Residues 562-621 (PRLFRIQINPEQIGLVIGPGGKTIRSITEQTGAKIDIEDTGAVTISAVDADSALRAKSII) form the KH domain. One can recognise an S1 motif domain in the interval 631 to 699 (GDVYIGKVTR…QKGRVNLTRK (69 aa)).

The protein belongs to the polyribonucleotide nucleotidyltransferase family. Mg(2+) is required as a cofactor.

It localises to the cytoplasm. It carries out the reaction RNA(n+1) + phosphate = RNA(n) + a ribonucleoside 5'-diphosphate. Involved in mRNA degradation. Catalyzes the phosphorolysis of single-stranded polyribonucleotides processively in the 3'- to 5'-direction. The chain is Polyribonucleotide nucleotidyltransferase from Synechococcus sp. (strain ATCC 27144 / PCC 6301 / SAUG 1402/1) (Anacystis nidulans).